Reading from the N-terminus, the 661-residue chain is UvrABC system protein B (661 aa).

The 388-residue stretch at 26–413 (KGINEGRKHQ…TPEMVEQIIR (388 aa)) folds into the Helicase ATP-binding domain. ATP is bound at residue 39–46 (GATGTGKT). A Beta-hairpin motif is present at residues 92–115 (YYDYYQPEAYVPQTDTFIEKDASI). Positions 430-596 (QIDDLIGEIQ…TINKKIRDVI (167 aa)) constitute a Helicase C-terminal domain. The 36-residue stretch at 625–660 (EKVIAQMESDMKEAAKALDFERAAELRDLLLELKSE) folds into the UVR domain.

The protein belongs to the UvrB family. As to quaternary structure, forms a heterotetramer with UvrA during the search for lesions. Interacts with UvrC in an incision complex.

It is found in the cytoplasm. Functionally, the UvrABC repair system catalyzes the recognition and processing of DNA lesions. A damage recognition complex composed of 2 UvrA and 2 UvrB subunits scans DNA for abnormalities. Upon binding of the UvrA(2)B(2) complex to a putative damaged site, the DNA wraps around one UvrB monomer. DNA wrap is dependent on ATP binding by UvrB and probably causes local melting of the DNA helix, facilitating insertion of UvrB beta-hairpin between the DNA strands. Then UvrB probes one DNA strand for the presence of a lesion. If a lesion is found the UvrA subunits dissociate and the UvrB-DNA preincision complex is formed. This complex is subsequently bound by UvrC and the second UvrB is released. If no lesion is found, the DNA wraps around the other UvrB subunit that will check the other stand for damage. This Bacillus licheniformis (strain ATCC 14580 / DSM 13 / JCM 2505 / CCUG 7422 / NBRC 12200 / NCIMB 9375 / NCTC 10341 / NRRL NRS-1264 / Gibson 46) protein is UvrABC system protein B.